A 270-amino-acid polypeptide reads, in one-letter code: B3 domain-containing protein Os03g0212300 (270 aa).

2 DNA-binding regions (TF-B3) span residues 13-110 (FEFF…FDET) and 158-265 (VTLR…RKAD).

The protein localises to the nucleus. This chain is B3 domain-containing protein Os03g0212300, found in Oryza sativa subsp. japonica (Rice).